Consider the following 205-residue polypeptide: Peptidyl-tRNA hydrolase (205 aa).

Tyr18 is a binding site for tRNA. His23 acts as the Proton acceptor in catalysis. Residues Tyr69, Asn71, and Asn117 each contribute to the tRNA site.

It belongs to the PTH family. As to quaternary structure, monomer.

The protein resides in the cytoplasm. It catalyses the reaction an N-acyl-L-alpha-aminoacyl-tRNA + H2O = an N-acyl-L-amino acid + a tRNA + H(+). In terms of biological role, hydrolyzes ribosome-free peptidyl-tRNAs (with 1 or more amino acids incorporated), which drop off the ribosome during protein synthesis, or as a result of ribosome stalling. Functionally, catalyzes the release of premature peptidyl moieties from peptidyl-tRNA molecules trapped in stalled 50S ribosomal subunits, and thus maintains levels of free tRNAs and 50S ribosomes. In Synechococcus sp. (strain CC9605), this protein is Peptidyl-tRNA hydrolase.